The following is a 481-amino-acid chain: UDP-glycosyltransferase 72B3 (481 aa).

UDP-alpha-D-glucose-binding positions include S277, 347–349, 364–372, and 386–389; these read APQ, HCGWNSSLE, and YAEQ.

Belongs to the UDP-glycosyltransferase family.

Functionally, possesses low quercetin 3-O-glucosyltransferase activity in vitro. This Arabidopsis thaliana (Mouse-ear cress) protein is UDP-glycosyltransferase 72B3 (UGT72B3).